Here is a 442-residue protein sequence, read N- to C-terminus: Thymidine phosphorylase (442 aa).

Belongs to the thymidine/pyrimidine-nucleoside phosphorylase family. Homodimer.

It carries out the reaction thymidine + phosphate = 2-deoxy-alpha-D-ribose 1-phosphate + thymine. It functions in the pathway pyrimidine metabolism; dTMP biosynthesis via salvage pathway; dTMP from thymine: step 1/2. The enzymes which catalyze the reversible phosphorolysis of pyrimidine nucleosides are involved in the degradation of these compounds and in their utilization as carbon and energy sources, or in the rescue of pyrimidine bases for nucleotide synthesis. This Pectobacterium atrosepticum (strain SCRI 1043 / ATCC BAA-672) (Erwinia carotovora subsp. atroseptica) protein is Thymidine phosphorylase.